Here is a 206-residue protein sequence, read N- to C-terminus: RNA-binding protein with multiple splicing 2 (206 aa).

An N-acetylserine modification is found at Ser-2. In terms of domain architecture, RRM spans 25–102 (RTLFVSGLPV…QTLRLEFAKA (78 aa)). The tract at residues 35-45 (DIKPRELYLLF) is important for homodimerization.

Homodimer. Interacts with EEF2.

It is found in the cytoplasm. The protein resides in the nucleus. The protein localises to the stress granule. RNA-binding protein involved in the regulation of smooth muscle cell differentiation and proliferation in the gastrointestinal system. Binds NOG mRNA, the major inhibitor of the bone morphogenetic protein (BMP) pathway. Mediates an increase of NOG mRNA levels, thereby contributing to the negative regulation of BMP signaling pathway and promoting reversible dedifferentiation and proliferation of smooth muscle cells. Acts as a pre-mRNA alternative splicing regulator. Mediates ACTN1 and FLNB alternative splicing. Likely binds to mRNA tandem CAC trinucleotide or CA dinucleotide motifs. The polypeptide is RNA-binding protein with multiple splicing 2 (Rbpms2) (Mus musculus (Mouse)).